Consider the following 329-residue polypeptide: Phosphate acyltransferase (329 aa).

It belongs to the PlsX family. In terms of assembly, homodimer. Probably interacts with PlsY.

The protein localises to the cytoplasm. The enzyme catalyses a fatty acyl-[ACP] + phosphate = an acyl phosphate + holo-[ACP]. It participates in lipid metabolism; phospholipid metabolism. In terms of biological role, catalyzes the reversible formation of acyl-phosphate (acyl-PO(4)) from acyl-[acyl-carrier-protein] (acyl-ACP). This enzyme utilizes acyl-ACP as fatty acyl donor, but not acyl-CoA. The protein is Phosphate acyltransferase of Campylobacter concisus (strain 13826).